A 387-amino-acid chain; its full sequence is EARP and GARP complex-interacting protein 1 (387 aa).

Methionine 1 is subject to N-acetylmethionine. WD repeat units follow at residues 4-48 (DAPV…IIDF), 55-101 (INKN…VWRM), 124-164 (ELLC…LWDL), 172-214 (VLAS…GWDT), 219-258 (QIYC…FWDT), and 263-302 (EPVK…LSNM). The tract at residues 310-335 (FGHLVDDDDISDQEDHRSEEKSKEPL) is disordered. Serine 320 carries the phosphoserine modification. A compositionally biased stretch (basic and acidic residues) spans 322-335 (QEDHRSEEKSKEPL). The WD 7 repeat unit spans residues 338-379 (NVIATYEEHEDSVYAVDWSSADPWLFASLSYDGRLVINRVPR).

Belongs to the WD repeat EIPR1 family. Interacts with two multisubunit tethering complexes: EARP composed of VPS50, VPS51, VPS52 and VPS53 subunits and GARP complex composed of VPS51, VPS52, VPS53 and VPS54 subunits. Interacts with SNAP29.

The protein localises to the golgi apparatus. The protein resides in the trans-Golgi network. Acts as a component of endosomal retrieval machinery that is involved in protein transport from early endosomes to either recycling endosomes or the trans-Golgi network. Mediates the recruitment of Golgi-associated retrograde protein (GARP) complex to the trans-Golgi network and controls early endosome-to-Golgi transport of internalized protein. Promotes the recycling of internalized transferrin receptor (TFRC) to the plasma membrane through interaction with endosome-associated recycling protein (EARP) complex. Controls proper insulin distribution and secretion, and retention of cargo in mature dense core vesicles. Required for the stability of the endosome-associated retrograde protein (EARP) complex subunits and for proper localization and association of EARP with membranes. The chain is EARP and GARP complex-interacting protein 1 from Homo sapiens (Human).